We begin with the raw amino-acid sequence, 557 residues long: E3 ubiquitin-protein ligase ARIH1 (557 aa).

A compositionally biased stretch (acidic residues) spans 1 to 47; sequence MDSDEGYNYEFDEDEECSEEDSGAEEEEDEDDDEPDDDTLDLGEVEL. The segment at 1–95 is disordered; the sequence is MDSDEGYNYE…GGGGGPGHEQ (95 aa). Gly residues predominate over residues 65–92; the sequence is ETGGGGGSALGPGGGGGGGGGGGGGGPG. Residues 105–153 form a UBA-like region; sequence TAEQILQHMVECIREVNEVIQNPATITRILLSHFNWDKEKLMERYFDGN. Position 142 is an N6-acetyllysine (K142). The segment at 182 to 393 is TRIAD supradomain; that stretch reads QDMPCQICYL…SAWYNCNRYN (212 aa). C186, C189, C203, H205, C208, C211, C231, C236, C276, C281, C297, C299, C304, C307, H312, C317, C344, and C347 together coordinate Zn(2+). Residues 186–236 form an RING-type 1 zinc finger; the sequence is CQICYLNYPNSYFTGLECGHKFCMQCWSEYLTTKIMEEGMGQTISCPAHGC. The IBR-type zinc finger occupies 256–317; the sequence is LKYQHLITNS…GENWHDPVKC (62 aa). The RING-type 2; atypical zinc finger occupies 344 to 375; the sequence is CPKCHVTIEKDGGCNHMVCRNQNCKAEFCWVC. C357 is an active-site residue. Zn(2+)-binding residues include C362, C367, C372, C375, H382, and C389. Residues 408 to 557 form an ariadne domain region; the sequence is RAALQRYLFY…EKDLWEYIED (150 aa).

Belongs to the RBR family. Ariadne subfamily. In terms of assembly, interacts (via the first RING-type zinc finger) with UBE2L3. Associates with cullin-RING ubiquitin ligase (CRL) complexes containing CUL1, CUL2 and CUL3. Interacts with neddylated CUL1. Interacts with neddylated CUL2. Interacts with neddylated CUL3. Interacts with neddylated CUL4A. As to expression, widely expressed.

The protein resides in the cytoplasm. Its subcellular location is the nucleus. The protein localises to the cajal body. The enzyme catalyses [E2 ubiquitin-conjugating enzyme]-S-ubiquitinyl-L-cysteine + [acceptor protein]-L-lysine = [E2 ubiquitin-conjugating enzyme]-L-cysteine + [acceptor protein]-N(6)-ubiquitinyl-L-lysine.. It participates in protein modification; protein ubiquitination. With respect to regulation, autoinhibited by the ariadne domain, which masks the second RING-type zinc finger that contains the active site and inhibits the E3 activity. Inhibition is relieved upon binding to neddylated cullin-RING ubiquitin ligase complexes, which activate the E3 ligase activity of ARIH1. Its function is as follows. E3 ubiquitin-protein ligase, which catalyzes ubiquitination of target proteins together with ubiquitin-conjugating enzyme E2 UBE2L3. Acts as an atypical E3 ubiquitin-protein ligase by working together with cullin-RING ubiquitin ligase (CRL) complexes and initiating ubiquitination of CRL substrates: associates with CRL complexes and specifically mediates addition of the first ubiquitin on CRLs targets. The initial ubiquitin is then elongated by CDC34/UBE2R1 and UBE2R2. E3 ubiquitin-protein ligase activity is activated upon binding to neddylated cullin-RING ubiquitin ligase complexes. Plays a role in protein translation in response to DNA damage by mediating ubiquitination of EIF4E2, the consequences of EIF4E2 ubiquitination are however unclear. According to a report, EIF4E2 ubiquitination leads to promote EIF4E2 cap-binding and protein translation arrest. According to another report EIF4E2 ubiquitination leads to its subsequent degradation. Acts as the ligase involved in ISGylation of EIF4E2. In vitro, controls the degradation of the LINC (LInker of Nucleoskeleton and Cytoskeleton) complex member SUN2 and may therefore have a role in the formation and localization of the LINC complex, and as a consequence, nuclear subcellular localization and nuclear morphology. The polypeptide is E3 ubiquitin-protein ligase ARIH1 (Homo sapiens (Human)).